We begin with the raw amino-acid sequence, 486 residues long: MSSSSPPAGAASAAISASEKVDGFTRKSVRKAQRQKRSQGSSQFRSQGSQAELHPLPQLKDATSNEQQELFCQKLQQCCILFDFMDSVSDLKSKEIKRATLNELVEYVSTNRGVIVESAYSDIVKMISANIFRTLPPSDNPDFDPEEDEPTLEASWPHIQLVYEFFLRFLESPDFQPSIAKRYIDQKFVQQLLELFDSEDPRERDFLKTVLHRIYGKFLGLRAFIRKQINNIFLRFIYETEHFNGVAELLEILGSIINGFALPLKAEHKQFLMKVLIPMHTAKGLALFHAQLAYCVVQFLEKDTTLTEPVIRGLLKFWPKTCSQKEVMFLGEIEEILDVIEPTQFKKIEEPLFKQISKCVSSSHFQVAERALYFWNNEYILSLIEENIDKILPIMFASLYKISKEHWNPTIVALVYNVLKTLMEMNGKLFDDLTSSYKAERQREKKKELEREELWKKLEELKLKKALEKQNSAYNMHSILSNTSAE.

The segment covering Met1–Ser18 has biased composition (low complexity). Positions Met1–Glu52 are disordered. Residue Ser2 is modified to N-acetylserine. Residues Lys27–Arg37 show a composition bias toward basic residues. Over residues Ser38 to Ala51 the composition is skewed to low complexity. 3 positions are modified to phosphoserine: Ser41, Ser42, and Ser49.

Belongs to the phosphatase 2A regulatory subunit B56 family. In terms of assembly, PP2A consists of a common heterodimeric core enzyme, composed of a 36 kDa catalytic subunit (subunit C) and a 65 kDa constant regulatory subunit (PR65 or subunit A), that associates with a variety of regulatory subunits. Proteins that associate with the core dimer include three families of regulatory subunits B (the R2/B/PR55/B55, R3/B''/PR72/PR130/PR59 and R5/B'/B56 families), the 48 kDa variable regulatory subunit, viral proteins, and cell signaling molecules. Interacts with SGO1. In terms of processing, phosphorylated on serine residues. In terms of tissue distribution, widely expressed with the highest expression in heart and skeletal muscle.

It is found in the cytoplasm. The protein resides in the nucleus. Its subcellular location is the chromosome. The protein localises to the centromere. Its function is as follows. The B regulatory subunit might modulate substrate selectivity and catalytic activity, and might also direct the localization of the catalytic enzyme to a particular subcellular compartment. In Homo sapiens (Human), this protein is Serine/threonine-protein phosphatase 2A 56 kDa regulatory subunit alpha isoform (PPP2R5A).